A 695-amino-acid chain; its full sequence is Protein MALE DISCOVERER 1 (695 aa).

Residues 1 to 29 form the signal peptide; the sequence is MGCRWNPIGFQFSCFMFLIITLQSRSSLS. Topologically, residues 30–340 are extracellular; the sequence is LESEGFVLLK…SKGFKDVWLY (311 aa). N-linked (GlcNAc...) asparagine glycosylation is found at Asn56 and Asn80. LRR repeat units follow at residues 75–98, 99–121, 123–144, and 147–168; these read KVQMLNLSGCSLGGTLAPELSQLS, ELRSLILSKNKLSGDIPNEFASF, KLEFLDLRDNNLNGVVPPELNK, and TPENLLLSGNKFAGFMTVKFLR. An N-linked (GlcNAc...) asparagine glycan is attached at Asn247. The tract at residues 302 to 325 is disordered; sequence PPLIPPSSPPPLPTNNTIASDPPR. Residues 303–314 show a composition bias toward pro residues; it reads PLIPPSSPPPLP. An N-linked (GlcNAc...) asparagine glycan is attached at Asn316. A helical membrane pass occupies residues 341–361; the sequence is VVIGVAAFVAMLIIVAVIFFF. At 362–695 the chain is on the cytoplasmic side; that stretch reads RKRAVKSIGP…ELEILSSEAT (334 aa). Residues 363-668 form the Protein kinase domain; sequence KRAVKSIGPW…YVVQQLKEVI (306 aa). Residue Ser652 is modified to Phosphoserine.

It belongs to the protein kinase superfamily. Ser/Thr protein kinase family. In terms of assembly, homodimer. Interacts with MIK1, MIK2 and LURE1.2. LURE1.2 enhances the heterodimerization of MDIS1 with MIK1 or MIK2. Phosphorylated by MIK1. Expressed in pollen tubes and seedlings.

Its subcellular location is the cell membrane. The protein localises to the endomembrane system. It catalyses the reaction L-seryl-[protein] + ATP = O-phospho-L-seryl-[protein] + ADP + H(+). It carries out the reaction L-threonyl-[protein] + ATP = O-phospho-L-threonyl-[protein] + ADP + H(+). Its function is as follows. Involved in the pollen tube perception of the female signal. This is Protein MALE DISCOVERER 1 from Arabidopsis thaliana (Mouse-ear cress).